Reading from the N-terminus, the 318-residue chain is CRISPR-associated endonuclease Cas1 1 (318 aa).

Positions 160, 225, and 240 each coordinate Mn(2+).

It belongs to the CRISPR-associated endonuclease Cas1 family. Homodimer, forms a heterotetramer with a Cas2 homodimer. It depends on Mg(2+) as a cofactor. Mn(2+) serves as cofactor.

Functionally, CRISPR (clustered regularly interspaced short palindromic repeat), is an adaptive immune system that provides protection against mobile genetic elements (viruses, transposable elements and conjugative plasmids). CRISPR clusters contain spacers, sequences complementary to antecedent mobile elements, and target invading nucleic acids. CRISPR clusters are transcribed and processed into CRISPR RNA (crRNA). Acts as a dsDNA endonuclease. Involved in the integration of spacer DNA into the CRISPR cassette. The polypeptide is CRISPR-associated endonuclease Cas1 1 (Thermodesulfovibrio yellowstonii (strain ATCC 51303 / DSM 11347 / YP87)).